The primary structure comprises 426 residues: 3-isopropylmalate dehydratase large subunit (426 aa).

[4Fe-4S] cluster contacts are provided by cysteine 307, cysteine 367, and cysteine 370.

The protein belongs to the aconitase/IPM isomerase family. LeuC type 2 subfamily. As to quaternary structure, heterodimer of LeuC and LeuD. [4Fe-4S] cluster serves as cofactor.

The enzyme catalyses (2R,3S)-3-isopropylmalate = (2S)-2-isopropylmalate. The protein operates within amino-acid biosynthesis; L-leucine biosynthesis; L-leucine from 3-methyl-2-oxobutanoate: step 2/4. Catalyzes the isomerization between 2-isopropylmalate and 3-isopropylmalate, via the formation of 2-isopropylmaleate. The sequence is that of 3-isopropylmalate dehydratase large subunit from Aliarcobacter butzleri (strain RM4018) (Arcobacter butzleri).